An 81-amino-acid chain; its full sequence is Photosystem I iron-sulfur center (81 aa).

4Fe-4S ferredoxin-type domains are found at residues 2–31 and 37–68; these read SHTVKIYDTCIGCTQCVRACPTDVLEMVPW and GQIASSPRVEDCVGCKRCETACPTDFLSVRVY. Residues C11, C14, C17, C21, C48, C51, C54, and C58 each contribute to the [4Fe-4S] cluster site.

As to quaternary structure, the eukaryotic PSI reaction center is composed of at least 11 subunits. Requires [4Fe-4S] cluster as cofactor.

Its subcellular location is the plastid. It localises to the chloroplast thylakoid membrane. It carries out the reaction reduced [plastocyanin] + hnu + oxidized [2Fe-2S]-[ferredoxin] = oxidized [plastocyanin] + reduced [2Fe-2S]-[ferredoxin]. Its function is as follows. Apoprotein for the two 4Fe-4S centers FA and FB of photosystem I (PSI); essential for photochemical activity. FB is the terminal electron acceptor of PSI, donating electrons to ferredoxin. The C-terminus interacts with PsaA/B/D and helps assemble the protein into the PSI complex. Required for binding of PsaD and PsaE to PSI. PSI is a plastocyanin/cytochrome c6-ferredoxin oxidoreductase, converting photonic excitation into a charge separation, which transfers an electron from the donor P700 chlorophyll pair to the spectroscopically characterized acceptors A0, A1, FX, FA and FB in turn. This Thalassiosira pseudonana (Marine diatom) protein is Photosystem I iron-sulfur center.